The following is a 163-amino-acid chain: Probable ribosome biogenesis protein RLP24 (163 aa).

It belongs to the eukaryotic ribosomal protein eL24 family. As to quaternary structure, associated with nucleolar and cytoplasmic pre-60S particles. At the end of biogenesis it dissociates from cytoplasmic pre-60S particles and is likely to be exchanged for its ribosomal homolog, RPL24.

It localises to the nucleus. The protein resides in the nucleolus. In terms of biological role, involved in the biogenesis of the 60S ribosomal subunit. Ensures the docking of GTPBP4/NOG1 to pre-60S particles. The polypeptide is Probable ribosome biogenesis protein RLP24 (Rsl24d1) (Rattus norvegicus (Rat)).